Here is a 102-residue protein sequence, read N- to C-terminus: Small ribosomal subunit protein uS10 (102 aa).

This sequence belongs to the universal ribosomal protein uS10 family. As to quaternary structure, part of the 30S ribosomal subunit.

Involved in the binding of tRNA to the ribosomes. This Citrifermentans bemidjiense (strain ATCC BAA-1014 / DSM 16622 / JCM 12645 / Bem) (Geobacter bemidjiensis) protein is Small ribosomal subunit protein uS10.